The primary structure comprises 380 residues: DNA replication and repair protein RecF (380 aa).

Glycine 30 to threonine 37 serves as a coordination point for ATP.

Belongs to the RecF family.

It localises to the cytoplasm. Its function is as follows. The RecF protein is involved in DNA metabolism; it is required for DNA replication and normal SOS inducibility. RecF binds preferentially to single-stranded, linear DNA. It also seems to bind ATP. In Synechococcus sp. (strain JA-2-3B'a(2-13)) (Cyanobacteria bacterium Yellowstone B-Prime), this protein is DNA replication and repair protein RecF.